A 156-amino-acid polypeptide reads, in one-letter code: MPRRRVIGQRKILPDPKFGSELLAKFVNIVMLDGKKSTAEKIVYGALNVAAEKSGKSHLEIFETALDNIRPQVEVKSRRVGGSTYQVPVEVRPVRRNALGMRWLVDAARKRGEKSMGLRLAQEIVDAADNKGTAVKKREDVHRMAEANKAFAHYRW.

Belongs to the universal ribosomal protein uS7 family. Part of the 30S ribosomal subunit. Contacts proteins S9 and S11.

Its function is as follows. One of the primary rRNA binding proteins, it binds directly to 16S rRNA where it nucleates assembly of the head domain of the 30S subunit. Is located at the subunit interface close to the decoding center, probably blocks exit of the E-site tRNA. This Pseudoalteromonas translucida (strain TAC 125) protein is Small ribosomal subunit protein uS7.